The sequence spans 460 residues: Cysteine--tRNA ligase (460 aa).

Cysteine 29 is a Zn(2+) binding site. Positions 31 to 41 (ATPQSSPHIGH) match the 'HIGH' region motif. Cysteine 212, histidine 237, and glutamate 241 together coordinate Zn(2+). The 'KMSKS' region motif lies at 268-272 (KMSKS). Lysine 271 is an ATP binding site.

It belongs to the class-I aminoacyl-tRNA synthetase family. As to quaternary structure, monomer. The cofactor is Zn(2+).

It localises to the cytoplasm. The catalysed reaction is tRNA(Cys) + L-cysteine + ATP = L-cysteinyl-tRNA(Cys) + AMP + diphosphate. This Corynebacterium glutamicum (strain ATCC 13032 / DSM 20300 / JCM 1318 / BCRC 11384 / CCUG 27702 / LMG 3730 / NBRC 12168 / NCIMB 10025 / NRRL B-2784 / 534) protein is Cysteine--tRNA ligase.